The following is a 331-amino-acid chain: Ferredoxin--NADP reductase 2 (331 aa).

7 residues coordinate FAD: glutamate 37, glutamine 45, tyrosine 50, valine 90, phenylalanine 124, aspartate 286, and threonine 327.

It belongs to the ferredoxin--NADP reductase type 2 family. Homodimer. FAD is required as a cofactor.

It carries out the reaction 2 reduced [2Fe-2S]-[ferredoxin] + NADP(+) + H(+) = 2 oxidized [2Fe-2S]-[ferredoxin] + NADPH. This Listeria innocua serovar 6a (strain ATCC BAA-680 / CLIP 11262) protein is Ferredoxin--NADP reductase 2.